A 148-amino-acid polypeptide reads, in one-letter code: Aspartate carbamoyltransferase regulatory chain (148 aa).

The Zn(2+) site is built by C106, C111, C134, and C137.

Belongs to the PyrI family. In terms of assembly, contains catalytic and regulatory chains. Requires Zn(2+) as cofactor.

Its function is as follows. Involved in allosteric regulation of aspartate carbamoyltransferase. The protein is Aspartate carbamoyltransferase regulatory chain of Methanococcus vannielii (strain ATCC 35089 / DSM 1224 / JCM 13029 / OCM 148 / SB).